We begin with the raw amino-acid sequence, 546 residues long: Parathyroid hormone 2 receptor (546 aa).

The first 24 residues, 1–24 (MAWLETFTYICGWLILSSCLLVRA), serve as a signal peptide directing secretion. Topologically, residues 27–143 (DSDGTITIEE…GKQEFFESLY (117 aa)) are extracellular. N-linked (GlcNAc...) asparagine glycosylation is found at asparagine 51, asparagine 106, asparagine 116, and asparagine 121. A helical membrane pass occupies residues 144-167 (ILYTVGYSISFGSLAVAILIIGYF). Residues 168–174 (RRLHCTR) lie on the Cytoplasmic side of the membrane. A helical membrane pass occupies residues 175-194 (NYIHLHLFVSFMLRAMSIFV). Topologically, residues 195–235 (KDRVAQAHLGVEALQSLVMQGDLQNFIGGPSVDKSQYVGCK) are extracellular. Residues 236 to 258 (IAVVMFIYFLATNYYWILVEGLY) traverse the membrane as a helical segment. The Cytoplasmic segment spans residues 259–273 (LHNLIFVSFFSDTKY). A helical transmembrane segment spans residues 274–295 (LWGFISIGWGFPAVFVVAWAVA). At 296–313 (RATLADTRCWELSAGDRW) the chain is on the extracellular side. Residues 314-334 (IYQAPILAAIGLNFILFLNTV) traverse the membrane as a helical segment. Topologically, residues 335-361 (RVLATKIWETNAVGHDMRKQYRKLAKS) are cytoplasmic. A helical transmembrane segment spans residues 362-380 (TLVLVLVFGVHYIVFVCQP). Residues 381 to 391 (HSFSGLWWEIR) are Extracellular-facing. The chain crosses the membrane as a helical span at residues 392–414 (MHCELFFNSFQGFFVSIVYCYCN). Over 415 to 546 (GEVQAEVKKM…EGCKGETHPI (132 aa)) the chain is Cytoplasmic. The tract at residues 497–546 (SEQDCQTHSPPEETKEGHRRQGDDSPVMESSRPVAFTLDTEGCKGETHPI) is disordered. Basic and acidic residues-rich tracts occupy residues 506–519 (PPEETKEGHRRQGD) and 537–546 (EGCKGETHPI).

The protein belongs to the G-protein coupled receptor 2 family. In terms of assembly, binds to TIPF39/TIP39.

It is found in the cell membrane. Its function is as follows. This is a specific receptor for parathyroid hormone. The activity of this receptor is mediated by G proteins which activate adenylyl cyclase. PTH2R may be responsible for PTH effects in a number of physiological systems. It may play a significant role in pancreatic function. PTH2R presence in neurons indicates that it may function as a neurotransmitter receptor. The polypeptide is Parathyroid hormone 2 receptor (Pth2r) (Mus musculus (Mouse)).